Reading from the N-terminus, the 125-residue chain is Small ribosomal subunit protein uS12m (125 aa).

2 disordered regions span residues 1–23 (MPTL…RTRA) and 104–125 (LMGI…PKSI). Over residues 10-23 (HGREEKRRTDRTRA) the composition is skewed to basic and acidic residues.

It belongs to the universal ribosomal protein uS12 family.

The protein localises to the mitochondrion. Protein S12 is involved in the translation initiation step. The protein is Small ribosomal subunit protein uS12m (RPS12) of Raphanus sativus (Radish).